Here is a 406-residue protein sequence, read N- to C-terminus: GTPase Obg (406 aa).

In terms of domain architecture, Obg spans 1 to 159 (MRFVDEAVIT…REIRLELKVL (159 aa)). A disordered region spans residues 120–143 (GGEGGLGNTHFKSSTNRAPRKCTT). Positions 160–333 (ADVGLLGMPN…VVYYLMDQIE (174 aa)) constitute an OBG-type G domain. GTP contacts are provided by residues 166–173 (GMPNAGKS), 191–195 (FTTMV), 213–216 (DIPG), 283–286 (NKLD), and 314–316 (SGL). The Mg(2+) site is built by Ser173 and Thr193. The interval 381-406 (ESMMDDDDDFDDDEDDGDVESIYVRD) is disordered. Over residues 383–399 (MMDDDDDFDDDEDDGDV) the composition is skewed to acidic residues.

The protein belongs to the TRAFAC class OBG-HflX-like GTPase superfamily. OBG GTPase family. In terms of assembly, monomer. The cofactor is Mg(2+).

The protein resides in the cytoplasm. Its function is as follows. An essential GTPase which binds GTP, GDP and possibly (p)ppGpp with moderate affinity, with high nucleotide exchange rates and a fairly low GTP hydrolysis rate. Plays a role in control of the cell cycle, stress response, ribosome biogenesis and in those bacteria that undergo differentiation, in morphogenesis control. This Acinetobacter baumannii (strain SDF) protein is GTPase Obg.